A 359-amino-acid polypeptide reads, in one-letter code: Peptide chain release factor 1 (359 aa).

Gln-235 is modified (N5-methylglutamine). The tract at residues 287–312 is disordered; that stretch reads AQEASAMRSAQVGSGDRSERIRTYNF.

This sequence belongs to the prokaryotic/mitochondrial release factor family. Post-translationally, methylated by PrmC. Methylation increases the termination efficiency of RF1.

The protein localises to the cytoplasm. Functionally, peptide chain release factor 1 directs the termination of translation in response to the peptide chain termination codons UAG and UAA. In Chlamydia trachomatis serovar A (strain ATCC VR-571B / DSM 19440 / HAR-13), this protein is Peptide chain release factor 1.